A 265-amino-acid polypeptide reads, in one-letter code: MNTYKTYSERGQQHPNACARSLFELMERNESNLSVAVDVTTKKELLSIADAVGPFVCVLKTHIDIVEDFDHDLVAQLEQLAKKHDFLIFEDRKFADIGNTVKHQYANGIYKIASWSHITNAHTVPGEGIIKGLGEVGLPLGRGLLLLAEMSSKGALTKGSYTSESVEMARRNKDFVFGFIAQHKMNEHDDEDFVVMSPGVGLDVKGDGLGQQYRTPHEVIVESGGDIIIVGRGIYGNPDQVEAQAKRYRQAGWDAYLERVRLHKK.

Substrate contacts are provided by residues D38, 60 to 62 (KTH), 91 to 100 (DRKFADIGNT), Y213, and R232. Catalysis depends on K93, which acts as the Proton donor.

It belongs to the OMP decarboxylase family.

The enzyme catalyses orotidine 5'-phosphate + H(+) = UMP + CO2. It participates in pyrimidine metabolism; UMP biosynthesis via de novo pathway; UMP from orotate: step 2/2. The sequence is that of Orotidine 5'-phosphate decarboxylase (pyrG) from Mucor circinelloides f. lusitanicus (Mucor racemosus var. lusitanicus).